The primary structure comprises 229 residues: Octanoyltransferase (229 aa).

The BPL/LPL catalytic domain maps to 45–220; the sequence is ATAVDELWVV…ELARQFCFVL (176 aa). Substrate contacts are provided by residues 84 to 91, 151 to 153, and 164 to 166; these read RGGQVTYH, ALG, and GVA. The Acyl-thioester intermediate role is filled by cysteine 182.

This sequence belongs to the LipB family.

It localises to the cytoplasm. The enzyme catalyses octanoyl-[ACP] + L-lysyl-[protein] = N(6)-octanoyl-L-lysyl-[protein] + holo-[ACP] + H(+). It participates in protein modification; protein lipoylation via endogenous pathway; protein N(6)-(lipoyl)lysine from octanoyl-[acyl-carrier-protein]: step 1/2. Its function is as follows. Catalyzes the transfer of endogenously produced octanoic acid from octanoyl-acyl-carrier-protein onto the lipoyl domains of lipoate-dependent enzymes. Lipoyl-ACP can also act as a substrate although octanoyl-ACP is likely to be the physiological substrate. This chain is Octanoyltransferase, found in Xylella fastidiosa (strain 9a5c).